A 921-amino-acid chain; its full sequence is MMALGEPYYSSKPDKDFNFGSTMARRQMTPTMVTKLPKFVRNSPQAYDWIVRGLIFPTTGKTYFQRVVVITGGLEDGTYGSYAFNGSEWVEIYPIEHLNLMSSLKLIHKANALQERLRLSQEEKATLALDVQFLQHENVRLKELIPKPEPRKIQMKWIIVGAVLTFLSLIPGGYAQSQTNNTIFTDMIAACKYSTETLTENLDLRIKLALANITINDKLDAVRQILNFAFVPRAHWLRTVFYYIHYYEMWNIFMFVLAIGTVMRSARPGTDLITLATSHLSGFRMAVLPTIPFHTTMTLWVMNTLMVCYYFDNLLAITMAILAPILGIIFLCFMEDSNYVSQIRGLIATAVLIAGGHACLTLTGTTTSLFVVILTCRFIRMATVFIGTRFEIRDANGKVVATVPTRIKNVAFDFFQKLKQSGVRVGVNDFVVIKPGALCIIDTPEGKGTGFFSGNDIVTAAHVVGNNTFVSVCYEGLVYEAKVRYMPEKDIAFITCPGDLHPTARLKLSKNPDYSCVTVMAYVNEDLVVSTATAMVHGNTLSYAVRTQDGMSGAPVCDKYGRVLAVHQTNTGYTGGAVIIDPADFHPVKAPSQVELLKEEIERLKAQLNSAAENPVTVVTQQPIVTLEQKSVSDSDVVDLVRTAMEREMKVLRDEINGILAPFLQKKKGKTKHGRGRVRRNLRKGVKLLTEEEYRELLEKGLDRETFLDLIDRIIGERSGYPDYDDEDYYDEDDDGWGMVGDDVEFDYTEVINFDQAKPTPAPRTTKPKPCPEPKIEAQPLDLSQKKEKQPEHEQQVAKPTKPQKIEPQPYSQTYGKAPIWESYDFDWDEDDAKFILPAPHRLTKADEIVLGSKIVKLRTIIETAIKTQNYSALPEAVFELDKAAYEAGLEGFLQRVKSKNKAPKNYKGPQKTKGPKTTTH.

Helical transmembrane passes span 240 to 260 (VFYY…LAIG), 287 to 307 (VLPT…TLMV), 314 to 334 (LLAI…LCFM), and 345 to 365 (GLIA…LTGT). Active-site charge relay system; for serine protease activity residues include H462, D490, and S552. An O-(5'-phospho-RNA)-tyrosine modification is found at Y694. Disordered regions lie at residues 753–813 (NFDQ…PYSQ) and 900–921 (KNKA…TTTH). Basic and acidic residues predominate over residues 784–796 (SQKKEKQPEHEQQ). Positions 908-921 (KGPQKTKGPKTTTH) are enriched in low complexity.

This sequence belongs to the astroviridae polyprotein 1A family. In terms of assembly, monomer. Cleaved by the viral and host proteases. The protease is probably autocatalytically cleaved.

The protein resides in the host membrane. The enzyme catalyses RNA(n) + a ribonucleoside 5'-triphosphate = RNA(n+1) + diphosphate. In terms of biological role, responsible for the cleavage of the polyprotein into functional products. Its function is as follows. Protein covalently attached to the 5' extremity of the genomic and subgenomic RNAs. It may serve as a primer for the replicase. The sequence is that of Non-structural polyprotein 1A (ORF1) from Homo sapiens (Human).